The sequence spans 346 residues: Putative alpha/beta hydrolase R526 (346 aa).

Belongs to the AB hydrolase 3 family.

Its subcellular location is the virion. The chain is Putative alpha/beta hydrolase R526 from Acanthamoeba polyphaga mimivirus (APMV).